Reading from the N-terminus, the 487-residue chain is N-succinylglutamate 5-semialdehyde dehydrogenase (487 aa).

Position 221 to 226 (221 to 226 (GSSDTG)) interacts with NAD(+). Catalysis depends on residues glutamate 244 and cysteine 278.

Belongs to the aldehyde dehydrogenase family. AstD subfamily.

It carries out the reaction N-succinyl-L-glutamate 5-semialdehyde + NAD(+) + H2O = N-succinyl-L-glutamate + NADH + 2 H(+). It participates in amino-acid degradation; L-arginine degradation via AST pathway; L-glutamate and succinate from L-arginine: step 4/5. Its function is as follows. Catalyzes the NAD-dependent reduction of succinylglutamate semialdehyde into succinylglutamate. The protein is N-succinylglutamate 5-semialdehyde dehydrogenase of Burkholderia mallei (strain ATCC 23344).